A 671-amino-acid chain; its full sequence is Probable potassium transport system protein Kup 2 (671 aa).

12 helical membrane passes run 18-38, 60-80, 103-123, 146-166, 173-193, 218-238, 252-272, 292-312, 343-363, 373-393, 402-422, and 424-444; these read GFLIALGIVYGDIGTSPLYAM, VSLVIWTLTLITTVKYVLIAL, WLIIPAMIGGATLLADGALTP, AVMVTTLIILAFLFLIQRFGA, FGPIMFIWFGFLGVSGLINSF, AGFFILGSIFLVTTGAEALYS, WPFVKICIILSYCGQGAWLLA, MVIYVVILSTLAAIIASQALI, LYIPAVNFALWVTTSFFVLYF, YSLAITITMLMTTTLLTYFLI, IAIISIGLFCIEGSFFAASLV, and FINGAYIVVLIALAIIFVMFI.

This sequence belongs to the HAK/KUP transporter (TC 2.A.72) family.

It localises to the cell membrane. It carries out the reaction K(+)(in) + H(+)(in) = K(+)(out) + H(+)(out). Functionally, transport of potassium into the cell. Likely operates as a K(+):H(+) symporter. The polypeptide is Probable potassium transport system protein Kup 2 (Lactococcus lactis subsp. lactis (strain IL1403) (Streptococcus lactis)).